The chain runs to 299 residues: tRNA-cytidine(32) 2-sulfurtransferase (299 aa).

Positions 56-61 (SGGKDS) match the PP-loop motif motif. Residues Cys131, Cys134, and Cys222 each coordinate [4Fe-4S] cluster.

It belongs to the TtcA family. As to quaternary structure, homodimer. The cofactor is Mg(2+). [4Fe-4S] cluster is required as a cofactor.

It is found in the cytoplasm. It catalyses the reaction cytidine(32) in tRNA + S-sulfanyl-L-cysteinyl-[cysteine desulfurase] + AH2 + ATP = 2-thiocytidine(32) in tRNA + L-cysteinyl-[cysteine desulfurase] + A + AMP + diphosphate + H(+). It participates in tRNA modification. Functionally, catalyzes the ATP-dependent 2-thiolation of cytidine in position 32 of tRNA, to form 2-thiocytidine (s(2)C32). The sulfur atoms are provided by the cysteine/cysteine desulfurase (IscS) system. This is tRNA-cytidine(32) 2-sulfurtransferase from Xylella fastidiosa (strain M23).